The chain runs to 158 residues: Protein shisa-like-2B (158 aa).

The helical transmembrane segment at 65-85 threads the bilayer; the sequence is IGALVGLGIAALVLLAFVISV.

It belongs to the shisa family.

Its subcellular location is the membrane. This is Protein shisa-like-2B (Shisal2b) from Mus musculus (Mouse).